The following is a 306-amino-acid chain: tRNA (guanine-N(1)-)-methyltransferase (306 aa).

S-adenosyl-L-methionine-binding positions include G157 and 182–187 (IGDYVL).

It belongs to the RNA methyltransferase TrmD family. Homodimer.

Its subcellular location is the cytoplasm. It catalyses the reaction guanosine(37) in tRNA + S-adenosyl-L-methionine = N(1)-methylguanosine(37) in tRNA + S-adenosyl-L-homocysteine + H(+). Functionally, specifically methylates guanosine-37 in various tRNAs. In Bifidobacterium adolescentis (strain ATCC 15703 / DSM 20083 / NCTC 11814 / E194a), this protein is tRNA (guanine-N(1)-)-methyltransferase.